A 226-amino-acid chain; its full sequence is V-type proton ATPase subunit E 2 (226 aa).

The protein belongs to the V-ATPase E subunit family. In terms of assembly, V-ATPase is a heteromultimeric enzyme made up of two complexes: the ATP-hydrolytic V1 complex and the proton translocation V0 complex. The V1 complex consists of three catalytic AB heterodimers that form a heterohexamer, three peripheral stalks each consisting of EG heterodimers, one central rotor including subunits D and F, and the regulatory subunits C and H. The proton translocation complex V0 consists of the proton transport subunit a, a ring of proteolipid subunits c9c'', rotary subunit d, subunits e and f, and the accessory subunits ATP6AP1/Ac45 and ATP6AP2/PRR. As to expression, testis specific.

In terms of biological role, subunit of the V1 complex of vacuolar(H+)-ATPase (V-ATPase), a multisubunit enzyme composed of a peripheral complex (V1) that hydrolyzes ATP and a membrane integral complex (V0) that translocates protons. V-ATPase is responsible for acidifying and maintaining the pH of intracellular compartments and in some cell types, is targeted to the plasma membrane, where it is responsible for acidifying the extracellular environment. This chain is V-type proton ATPase subunit E 2 (ATP6V1E2), found in Homo sapiens (Human).